The sequence spans 173 residues: Catabolic 3-dehydroquinase (173 aa).

Y26 functions as the Proton acceptor in the catalytic mechanism. Substrate-binding residues include N102, H108, and D115. The Proton donor role is filled by H128. Substrate contacts are provided by residues 129–130 and R139; that span reads VS.

The protein belongs to the type-II 3-dehydroquinase family. In terms of assembly, homododecamer. Adopts a ring-like structure, composed of an arrangement of two hexameric rings stacked on top of one another.

The catalysed reaction is 3-dehydroquinate = 3-dehydroshikimate + H2O. It participates in aromatic compound metabolism; 3,4-dihydroxybenzoate biosynthesis; 3,4-dihydroxybenzoate from 3-dehydroquinate: step 1/2. Its function is as follows. 3-dehydroquinate dehydratase; part of the qa gene cluster that mediates the catabolism of quinic acid (QA) and as such, allows the use of QA as a sole carbon source. Catalyzes the second reaction in the inducible quinic acid catabolic pathway by converting 3-dehydroquinate into 3-dehydroshikimate. The qa cluster encodes 3 inducible enymes (qa-2, qa-3 and qa-4) catalyzing the first three reactions in the catabolism of quinic acid to protocatechuic acid (also known as 3,4-Dihydroxybenzoic acid). The sequence is that of Catabolic 3-dehydroquinase from Neurospora crassa (strain ATCC 24698 / 74-OR23-1A / CBS 708.71 / DSM 1257 / FGSC 987).